Here is a 374-residue protein sequence, read N- to C-terminus: Chaperone protein DnaJ (374 aa).

The J domain maps to 5–70 (DYYEVLGISR…SKRAAYDQFG (66 aa)). The CR-type zinc finger occupies 129–207 (GKTVKINIPG…CHGQGRVRQE (79 aa)). Zn(2+) is bound by residues Cys-142, Cys-145, Cys-159, Cys-162, Cys-181, Cys-184, Cys-195, and Cys-198. 4 CXXCXGXG motif repeats span residues 142-149 (CEACDGSG), 159-166 (CGTCQGMG), 181-188 (CPTCRGSG), and 195-202 (CKSCHGQG). A disordered region spans residues 216–238 (PGVDTGDRIRLSGEGEMGVDGGP).

This sequence belongs to the DnaJ family. In terms of assembly, homodimer. Requires Zn(2+) as cofactor.

The protein localises to the cytoplasm. Participates actively in the response to hyperosmotic and heat shock by preventing the aggregation of stress-denatured proteins and by disaggregating proteins, also in an autonomous, DnaK-independent fashion. Unfolded proteins bind initially to DnaJ; upon interaction with the DnaJ-bound protein, DnaK hydrolyzes its bound ATP, resulting in the formation of a stable complex. GrpE releases ADP from DnaK; ATP binding to DnaK triggers the release of the substrate protein, thus completing the reaction cycle. Several rounds of ATP-dependent interactions between DnaJ, DnaK and GrpE are required for fully efficient folding. Also involved, together with DnaK and GrpE, in the DNA replication of plasmids through activation of initiation proteins. The chain is Chaperone protein DnaJ from Marinobacter nauticus (strain ATCC 700491 / DSM 11845 / VT8) (Marinobacter aquaeolei).